A 531-amino-acid chain; its full sequence is Zinc finger protein 703-B (531 aa).

Polar residues predominate over residues 1 to 10; the sequence is MNCSPPGSCT. Disordered stretches follow at residues 1–28, 88–249, and 295–318; these read MNCSPPGSCTDTERQRSGTPATPCATLA, SQIG…VAPI, and VGNQLPGTLGLPGKPPSSSPLTGA. Composition is skewed to low complexity over residues 19 to 28 and 113 to 122; these read TPATPCATLA and RSSSLKLGES. The segment covering 171-180 has biased composition (polar residues); that stretch reads SPSSRVSSPG. Over residues 183–198 the composition is skewed to basic and acidic residues; that stretch reads CESKNNESQEKKEPEV. Residues 199 to 215 show a composition bias toward polar residues; that stretch reads NKSSLETSQANPTLTRA. The segment covering 216–227 has biased composition (low complexity); the sequence is SISNSSAESSQS. A C2H2-type zinc finger spans residues 404-432; that stretch reads HICNWVSASGPCDKRFATSEELLAHLRTH.

Belongs to the Elbow/Noc family.

It is found in the nucleus. It localises to the cytoplasm. In terms of biological role, transcriptional corepressor which does not bind directly to DNA and may regulate transcription through recruitment of histone deacetylases to gene promoters. Regulates cell adhesion, migration and proliferation. Involved in specification of the lateral neural plate border (NPB). May be required for segmental gene expression during hindbrain development. This is Zinc finger protein 703-B (znf703-b) from Xenopus laevis (African clawed frog).